Here is a 718-residue protein sequence, read N- to C-terminus: Catalase-peroxidase (718 aa).

Residues 98–219 (WHAAGTYRMG…LAATEMGLIY (122 aa)) constitute a cross-link (tryptophyl-tyrosyl-methioninium (Trp-Tyr) (with M-245)). His99 (proton acceptor) is an active-site residue. A cross-link (tryptophyl-tyrosyl-methioninium (Tyr-Met) (with W-98)) is located at residues 219 to 245 (YVNPEGPQASGDPRSAAPFIRATFGNM). Residue His260 coordinates heme b.

It belongs to the peroxidase family. Peroxidase/catalase subfamily. In terms of assembly, homodimer or homotetramer. It depends on heme b as a cofactor. In terms of processing, formation of the three residue Trp-Tyr-Met cross-link is important for the catalase, but not the peroxidase activity of the enzyme.

It carries out the reaction H2O2 + AH2 = A + 2 H2O. The catalysed reaction is 2 H2O2 = O2 + 2 H2O. Its function is as follows. Bifunctional enzyme with both catalase and broad-spectrum peroxidase activity. In Acinetobacter baumannii (strain ACICU), this protein is Catalase-peroxidase.